A 284-amino-acid chain; its full sequence is Phosphatidylglycerol--prolipoprotein diacylglyceryl transferase (284 aa).

Helical transmembrane passes span 18 to 38 (LGGI…VIAF), 62 to 82 (YFLW…VLIY), 106 to 126 (FVGI…IASY), 136 to 156 (LLIY…FGRI), 190 to 210 (PSQL…VLWA), 218 to 238 (GLLI…AEFY), and 252 to 272 (LSMG…ILLY). Residue R155 coordinates a 1,2-diacyl-sn-glycero-3-phospho-(1'-sn-glycerol).

This sequence belongs to the Lgt family.

It localises to the cell inner membrane. It carries out the reaction L-cysteinyl-[prolipoprotein] + a 1,2-diacyl-sn-glycero-3-phospho-(1'-sn-glycerol) = an S-1,2-diacyl-sn-glyceryl-L-cysteinyl-[prolipoprotein] + sn-glycerol 1-phosphate + H(+). It functions in the pathway protein modification; lipoprotein biosynthesis (diacylglyceryl transfer). Its function is as follows. Catalyzes the transfer of the diacylglyceryl group from phosphatidylglycerol to the sulfhydryl group of the N-terminal cysteine of a prolipoprotein, the first step in the formation of mature lipoproteins. The sequence is that of Phosphatidylglycerol--prolipoprotein diacylglyceryl transferase from Helicobacter pylori (strain G27).